A 430-amino-acid chain; its full sequence is MIOREX complex component 4 (430 aa).

A mitochondrion-targeting transit peptide spans 1–27 (MTVLYTSASLKKMKCLAFNMGMNCVRT). Residues 403-420 (FLISLSALLASFFAYYRY) form a helical membrane-spanning segment.

Associates with the mitochondrial ribosome.

The protein resides in the mitochondrion. It localises to the mitochondrion membrane. Its function is as follows. Component of MIOREX complexes, large expressome-like assemblies of ribosomes with factors involved in all the steps of post-transcriptional gene expression. In Saccharomyces cerevisiae (strain ATCC 204508 / S288c) (Baker's yeast), this protein is MIOREX complex component 4.